Here is a 424-residue protein sequence, read N- to C-terminus: Serine--tRNA ligase 1 (424 aa).

Residue 232–234 (TAE) coordinates L-serine. 263–265 (RSE) lines the ATP pocket. An L-serine-binding site is contributed by Glu-286. 350–353 (EISS) lines the ATP pocket. Ser-386 contacts L-serine.

Belongs to the class-II aminoacyl-tRNA synthetase family. Type-1 seryl-tRNA synthetase subfamily. Homodimer. The tRNA molecule binds across the dimer.

The protein resides in the cytoplasm. The enzyme catalyses tRNA(Ser) + L-serine + ATP = L-seryl-tRNA(Ser) + AMP + diphosphate + H(+). The catalysed reaction is tRNA(Sec) + L-serine + ATP = L-seryl-tRNA(Sec) + AMP + diphosphate + H(+). The protein operates within aminoacyl-tRNA biosynthesis; selenocysteinyl-tRNA(Sec) biosynthesis; L-seryl-tRNA(Sec) from L-serine and tRNA(Sec): step 1/1. Functionally, catalyzes the attachment of serine to tRNA(Ser). Is also able to aminoacylate tRNA(Sec) with serine, to form the misacylated tRNA L-seryl-tRNA(Sec), which will be further converted into selenocysteinyl-tRNA(Sec). The sequence is that of Serine--tRNA ligase 1 from Clostridium acetobutylicum (strain ATCC 824 / DSM 792 / JCM 1419 / IAM 19013 / LMG 5710 / NBRC 13948 / NRRL B-527 / VKM B-1787 / 2291 / W).